Consider the following 258-residue polypeptide: 3-deoxy-manno-octulosonate cytidylyltransferase (258 aa).

This sequence belongs to the KdsB family.

It is found in the cytoplasm. The enzyme catalyses 3-deoxy-alpha-D-manno-oct-2-ulosonate + CTP = CMP-3-deoxy-beta-D-manno-octulosonate + diphosphate. It participates in nucleotide-sugar biosynthesis; CMP-3-deoxy-D-manno-octulosonate biosynthesis; CMP-3-deoxy-D-manno-octulosonate from 3-deoxy-D-manno-octulosonate and CTP: step 1/1. It functions in the pathway bacterial outer membrane biogenesis; lipopolysaccharide biosynthesis. Its function is as follows. Activates KDO (a required 8-carbon sugar) for incorporation into bacterial lipopolysaccharide in Gram-negative bacteria. The protein is 3-deoxy-manno-octulosonate cytidylyltransferase of Gemmatimonas aurantiaca (strain DSM 14586 / JCM 11422 / NBRC 100505 / T-27).